The primary structure comprises 316 residues: N-acetylmuramic acid 6-phosphate etherase (316 aa).

The segment at 1-24 is disordered; sequence MTRFQSDAAVSADRGHLMTEQPNP. In terms of domain architecture, SIS spans 66–229; it reads IASRLKDGGR…STAVMVRLGK (164 aa). The active-site Proton donor is the E94. E125 is a catalytic residue.

The protein belongs to the GCKR-like family. MurNAc-6-P etherase subfamily. In terms of assembly, homodimer.

It carries out the reaction N-acetyl-D-muramate 6-phosphate + H2O = N-acetyl-D-glucosamine 6-phosphate + (R)-lactate. The protein operates within amino-sugar metabolism; N-acetylmuramate degradation. Functionally, specifically catalyzes the cleavage of the D-lactyl ether substituent of MurNAc 6-phosphate, producing GlcNAc 6-phosphate and D-lactate. This Parasynechococcus marenigrum (strain WH8102) protein is N-acetylmuramic acid 6-phosphate etherase.